The following is a 130-amino-acid chain: Small ribosomal subunit protein uS9 (130 aa).

The protein belongs to the universal ribosomal protein uS9 family.

This is Small ribosomal subunit protein uS9 (rpsI) from Shigella flexneri.